A 244-amino-acid chain; its full sequence is 1-(5-phosphoribosyl)-5-[(5-phosphoribosylamino)methylideneamino] imidazole-4-carboxamide isomerase (244 aa).

The active-site Proton acceptor is the Asp-10. Asp-132 functions as the Proton donor in the catalytic mechanism.

Belongs to the HisA/HisF family.

It localises to the cytoplasm. The catalysed reaction is 1-(5-phospho-beta-D-ribosyl)-5-[(5-phospho-beta-D-ribosylamino)methylideneamino]imidazole-4-carboxamide = 5-[(5-phospho-1-deoxy-D-ribulos-1-ylimino)methylamino]-1-(5-phospho-beta-D-ribosyl)imidazole-4-carboxamide. It functions in the pathway amino-acid biosynthesis; L-histidine biosynthesis; L-histidine from 5-phospho-alpha-D-ribose 1-diphosphate: step 4/9. This is 1-(5-phosphoribosyl)-5-[(5-phosphoribosylamino)methylideneamino] imidazole-4-carboxamide isomerase from Stenotrophomonas maltophilia (strain R551-3).